We begin with the raw amino-acid sequence, 466 residues long: Argininosuccinate lyase (466 aa).

Belongs to the lyase 1 family. Argininosuccinate lyase subfamily.

It localises to the cytoplasm. The enzyme catalyses 2-(N(omega)-L-arginino)succinate = fumarate + L-arginine. It participates in amino-acid biosynthesis; L-arginine biosynthesis; L-arginine from L-ornithine and carbamoyl phosphate: step 3/3. The sequence is that of Argininosuccinate lyase from Clostridium perfringens (strain ATCC 13124 / DSM 756 / JCM 1290 / NCIMB 6125 / NCTC 8237 / Type A).